Consider the following 215-residue polypeptide: Probable phosphoglycerate mutase GpmB (215 aa).

Substrate contacts are provided by residues 8–15 (RHGETEWN), 21–22 (QG), arginine 58, arginine 60, 82–85 (ELHM), and 151–152 (GI). Residue histidine 9 is the Tele-phosphohistidine intermediate of the active site. Catalysis depends on glutamate 82, which acts as the Proton donor/acceptor.

It belongs to the phosphoglycerate mutase family. GpmB subfamily.

The catalysed reaction is (2R)-2-phosphoglycerate = (2R)-3-phosphoglycerate. The protein operates within carbohydrate degradation; glycolysis; pyruvate from D-glyceraldehyde 3-phosphate: step 3/5. This chain is Probable phosphoglycerate mutase GpmB, found in Serratia proteamaculans (strain 568).